Consider the following 297-residue polypeptide: Probable endonuclease 4 (297 aa).

His-68, His-109, Glu-144, Asp-178, His-181, His-213, Asp-226, His-228, and Glu-258 together coordinate Zn(2+).

It belongs to the AP endonuclease 2 family. Zn(2+) is required as a cofactor.

The catalysed reaction is Endonucleolytic cleavage to 5'-phosphooligonucleotide end-products.. Endonuclease IV plays a role in DNA repair. It cleaves phosphodiester bonds at apurinic or apyrimidinic (AP) sites, generating a 3'-hydroxyl group and a 5'-terminal sugar phosphate. This Enterococcus faecalis (strain ATCC 700802 / V583) protein is Probable endonuclease 4.